Reading from the N-terminus, the 329-residue chain is Transmembrane protein I329L (329 aa).

A signal peptide spans 1–31; that stretch reads MLRVFIFFVFLGSGLTGRIKPQVTCKYFISE. N-linked (GlcNAc...) asparagine; by host glycosylation is found at asparagine 32, asparagine 39, asparagine 44, asparagine 76, asparagine 82, and asparagine 101. The Extracellular segment spans residues 32 to 239; the sequence is NNTWYKYNVT…NTERYKSCYP (208 aa). The LRR repeat unit spans residues 112-133; sequence ELKFLDLRYNDLQVIDYNILRK. N-linked (GlcNAc...) asparagine; by host glycans are attached at residues asparagine 185 and asparagine 219. Cysteine 195 and cysteine 237 form a disulfide bridge. A helical transmembrane segment spans residues 240–260; it reads LVFISILCSCISFLFLFICLL. Residues 261-329 are Cytoplasmic-facing; sequence RSICKKYSCT…EKKVSCSRRK (69 aa).

The protein belongs to the asfivirus I329L family. Highly glycosylated.

Its subcellular location is the host endoplasmic reticulum membrane. It is found in the host Golgi apparatus membrane. In terms of biological role, viral TLR3 homolog that probably prevents TLR3 dimerization and subsequent induction of IFN. Inhibits dsRNA-stimulated activation of NF-kB and IRF3. The protein is Transmembrane protein I329L of Ornithodoros (relapsing fever ticks).